The sequence spans 282 residues: Aminoglycoside 6-adenylyltransferase (282 aa).

It catalyses the reaction streptomycin + ATP = 6-O-adenylylstreptomycin + diphosphate. In terms of biological role, required for streptomycin resistance. Adenylates streptomycin on the O-6 residue. This Staphylococcus aureus protein is Aminoglycoside 6-adenylyltransferase.